Reading from the N-terminus, the 282-residue chain is Succinate dehydrogenase [ubiquinone] iron-sulfur subunit, mitochondrial (282 aa).

The region spanning 43–131 (YRFNPEAPGA…STKIYPLPHM (89 aa)) is the 2Fe-2S ferredoxin-type domain. Residues Cys-91, Cys-96, Cys-99, and Cys-111 each contribute to the [2Fe-2S] cluster site. Residues 174-204 (ERDRLDGLYECILCACCSTSCPSYWWNADKY) form the 4Fe-4S ferredoxin-type domain. [4Fe-4S] cluster-binding residues include Cys-184, Cys-187, and Cys-190. Cys-194 is a binding site for [3Fe-4S] cluster. Residue Trp-199 participates in a ubiquinone binding. [3Fe-4S] cluster contacts are provided by Cys-241 and Cys-247. Cys-251 lines the [4Fe-4S] cluster pocket.

It belongs to the succinate dehydrogenase/fumarate reductase iron-sulfur protein family. As to quaternary structure, component of complex II composed of four subunits: a flavoprotein (FP), an iron-sulfur protein (IP), and a cytochrome b composed of a large and a small subunit. It depends on [2Fe-2S] cluster as a cofactor. Requires [3Fe-4S] cluster as cofactor. [4Fe-4S] cluster is required as a cofactor.

Its subcellular location is the mitochondrion inner membrane. It carries out the reaction a quinone + succinate = fumarate + a quinol. The protein operates within carbohydrate metabolism; tricarboxylic acid cycle; fumarate from succinate (eukaryal route): step 1/1. In terms of biological role, iron-sulfur protein (IP) subunit of succinate dehydrogenase (SDH) that is involved in complex II of the mitochondrial electron transport chain and is responsible for transferring electrons from succinate to ubiquinone (coenzyme Q). This Caenorhabditis briggsae protein is Succinate dehydrogenase [ubiquinone] iron-sulfur subunit, mitochondrial.